A 274-amino-acid chain; its full sequence is Nitrogenase iron protein (274 aa).

Residue 8–15 (GKGGIGKS) participates in ATP binding. A [4Fe-4S] cluster-binding site is contributed by Cys-94. The residue at position 97 (Arg-97) is an ADP-ribosylarginine; by dinitrogenase reductase ADP-ribosyltransferase. Cys-131 contacts [4Fe-4S] cluster.

The protein belongs to the NifH/BchL/ChlL family. As to quaternary structure, homodimer. [4Fe-4S] cluster is required as a cofactor. Post-translationally, the reversible ADP-ribosylation of Arg-97 inactivates the nitrogenase reductase and regulates nitrogenase activity.

It carries out the reaction N2 + 8 reduced [2Fe-2S]-[ferredoxin] + 16 ATP + 16 H2O = H2 + 8 oxidized [2Fe-2S]-[ferredoxin] + 2 NH4(+) + 16 ADP + 16 phosphate + 6 H(+). Its function is as follows. The key enzymatic reactions in nitrogen fixation are catalyzed by the nitrogenase complex, which has 2 components: the iron protein and the molybdenum-iron protein. The sequence is that of Nitrogenase iron protein from Prosthecochloris aestuarii (strain DSM 271 / SK 413).